The sequence spans 352 residues: Molybdenum import ATP-binding protein ModC (352 aa).

The 229-residue stretch at 1-229 folds into the ABC transporter domain; that stretch reads MLELNFSQTL…SVMNPWLPKE (229 aa). Position 31 to 38 (31 to 38) interacts with ATP; it reads GVSGAGKT. Residues 289 to 352 form the Mop domain; the sequence is QTSIRNVLRA…AQIKSVSITA (64 aa).

It belongs to the ABC transporter superfamily. Molybdate importer (TC 3.A.1.8) family. As to quaternary structure, the complex is composed of two ATP-binding proteins (ModC), two transmembrane proteins (ModB) and a solute-binding protein (ModA).

The protein localises to the cell inner membrane. It catalyses the reaction molybdate(out) + ATP + H2O = molybdate(in) + ADP + phosphate + H(+). Its function is as follows. Part of the ABC transporter complex ModABC involved in molybdenum import. Responsible for energy coupling to the transport system. The polypeptide is Molybdenum import ATP-binding protein ModC (Shigella flexneri).